The following is a 204-amino-acid chain: Signal peptidase I (204 aa).

Residues 1–10 lie on the Cytoplasmic side of the membrane; it reads MNSFKNFLKE. Residues 11 to 30 form a helical membrane-spanning segment; sequence WGLFLLILSLLALSRIFFWS. Residues 31-204 are Extracellular-facing; it reads NVRVEGHSMD…LWPITRIGTF (174 aa). Residues S38 and K76 contribute to the active site.

Belongs to the peptidase S26 family.

The protein localises to the cell membrane. The enzyme catalyses Cleavage of hydrophobic, N-terminal signal or leader sequences from secreted and periplasmic proteins.. The chain is Signal peptidase I (lepB) from Streptococcus pneumoniae serotype 4 (strain ATCC BAA-334 / TIGR4).